A 470-amino-acid chain; its full sequence is Desmin (470 aa).

Positions 2–108 (SQAYSSSQRV…QEFLTTRTNE (107 aa)) are head. A Phosphoserine; by CDK1 modification is found at Ser-7. Residue Ser-12 is modified to Phosphoserine; by AURKB. At Arg-16 the chain carries Omega-N-methylarginine. The residue at position 17 (Thr-17) is a Phosphothreonine; by AURKB and ROCK1. Ser-28 bears the Phosphoserine; by CDK1 mark. The residue at position 31 (Ser-31) is a Phosphoserine. Ser-32 carries the phosphoserine; by CDK1 modification. Arg-37 carries the asymmetric dimethylarginine; alternate modification. An Omega-N-methylarginine; alternate modification is found at Arg-37. Ser-45 bears the Phosphoserine mark. Arg-58 is modified (ADP-ribosylarginine). Ser-60 is subject to Phosphoserine; by AURKB. Residue Ser-68 is modified to Phosphoserine. Arg-70 carries the post-translational modification Omega-N-methylarginine. Phosphothreonine; by ROCK1 occurs at positions 76 and 77. Ser-81 is subject to Phosphoserine. One can recognise an IF rod domain in the interval 108–416 (EKVELQELND…KLLEGEESRI (309 aa)). Residues 109–141 (KVELQELNDRFANYIEKVRFLEQQNAALAAEVN) are coil 1A. The linker 1 stretch occupies residues 142 to 151 (RLKGREPTRV). Residues 152 to 252 (AELYEEELRE…HEEEIRELQA (101 aa)) form a coil 1B region. The segment at 253-268 (QLQEQQVQVEMDMSKP) is linker 12. Residues 268–415 (PDLTAALRDI…RKLLEGEESR (148 aa)) are interaction with NEB. The tract at residues 269-287 (DLTAALRDIRAQYETIAAK) is coil 2A. Residues 288 to 295 (NISEAEEW) are linker 2. Residues Ser-290, Ser-358, Ser-361, and Ser-424 each carry the phosphoserine modification. Positions 296 to 412 (YKSKVSDLTQ…ATYRKLLEGE (117 aa)) are coil 2B. Positions 413–470 (ESRINLPIQTYSALNFRETSPEQRGSEVHTKKTVMIKTIETRDGEVVSEATQQQHEVL) are tail. An interaction with CRYAB region spans residues 438-453 (SEVHTKKTVMIKTIET).

Belongs to the intermediate filament family. As to quaternary structure, homomer. Interacts with DST. Interacts with MTM1. Interacts with EPPK1; interaction is dependent of higher-order structure of intermediate filament. Interacts with CRYAB. Interacts with NEB (via nebulin repeats 160-164). Interacts (via rod region) with NEBL (via nebulin repeats 1-5). Interacts with ASB2 isoform 1; the interaction targets DES for proteasomal degradation. Interacts with PLEC isoform 1C. Interacts with PKP1. Interacts with FLII. Post-translationally, ADP-ribosylation prevents ability to form intermediate filaments. In terms of processing, phosphorylation at Ser-7, Ser-28 and Ser-32 by CDK1, phosphorylation at Ser-60 by AURKB and phosphorylation at Thr-76 by ROCK1 contribute to efficient separation of desmin intermediate filaments during mitosis. Ubiquitination by a SCF-like complex containing ASB2 isoform 1 leads to proteasomal degradation.

The protein resides in the cytoplasm. Its subcellular location is the myofibril. The protein localises to the sarcomere. It is found in the z line. It localises to the cell membrane. The protein resides in the sarcolemma. Its subcellular location is the nucleus. The protein localises to the cell tip. It is found in the nucleus envelope. Functionally, muscle-specific type III intermediate filament essential for proper muscular structure and function. Plays a crucial role in maintaining the structure of sarcomeres, inter-connecting the Z-disks and forming the myofibrils, linking them not only to the sarcolemmal cytoskeleton, but also to the nucleus and mitochondria, thus providing strength for the muscle fiber during activity. In adult striated muscle they form a fibrous network connecting myofibrils to each other and to the plasma membrane from the periphery of the Z-line structures. May act as a sarcomeric microtubule-anchoring protein: specifically associates with detyrosinated tubulin-alpha chains, leading to buckled microtubules and mechanical resistance to contraction. Required for nuclear membrane integrity, via anchoring at the cell tip and nuclear envelope, resulting in maintenance of microtubule-derived intracellular mechanical forces. Contributes to the transcriptional regulation of the NKX2-5 gene in cardiac progenitor cells during a short period of cardiomyogenesis and in cardiac side population stem cells in the adult. Plays a role in maintaining an optimal conformation of nebulette (NEB) on heart muscle sarcomeres to bind and recruit cardiac alpha-actin. This Homo sapiens (Human) protein is Desmin (DES).